We begin with the raw amino-acid sequence, 487 residues long: L-tartrate/succinate antiporter (487 aa).

A run of 14 helical transmembrane segments spans residues 10 to 30, 33 to 53, 54 to 74, 93 to 113, 137 to 157, 189 to 209, 236 to 256, 292 to 312, 313 to 333, 340 to 360, 370 to 390, 393 to 413, 418 to 438, and 465 to 485; these read YLAPLAVIAIIALIPVPAGLE, TWLYFAVFTGVIVGLILEPVP, GAVVAMVGISIIAILSPWLLF, WAVSGFSNSVIWLIFAAFMFG, TLFLGYAVMFSELILAPVTPS, IGSYIMWMGIVADCVTSAIFL, FLGMLPLSILLVLLVPWLAYV, LMVGALVLWIFGGDYIDAAMV, GYSVVALMLLLRIISWDDIVS, VFFWLASLITLATGLNNTGFI, SLSGYSPTMVMVALIVVFYLL, FFASATAYTSALAPMMIAAAL, IPLPVFCLMVGAAIGLGSILT, and IFGLIFLVLLVITGLLWMPVV.

Belongs to the SLC13A/DASS transporter (TC 2.A.47) family. DIT1 subfamily.

It localises to the cell inner membrane. The enzyme catalyses (2R,3R)-tartrate(out) + succinate(in) = (2R,3R)-tartrate(in) + succinate(out). Its function is as follows. Catalyzes the uptake of tartrate in exchange for intracellular succinate. Essential for anaerobic L-tartrate fermentation. This Escherichia coli O157:H7 protein is L-tartrate/succinate antiporter (ttdT).